The primary structure comprises 272 residues: L-aminoadipate-semialdehyde dehydrogenase-phosphopantetheinyl transferase (272 aa).

The protein belongs to the P-Pant transferase superfamily. AcpS family.

It catalyses the reaction apo-[ACP] + CoA = holo-[ACP] + adenosine 3',5'-bisphosphate + H(+). Catalyzes the transfer of a 4'-phosphopantetheine moiety from coenzyme A to a serine residue of acceptor proteins, such as alpha-aminoadipate reductase. Necessary for alpha-aminoadipate reductase activity. This chain is L-aminoadipate-semialdehyde dehydrogenase-phosphopantetheinyl transferase, found in Saccharomyces cerevisiae (strain ATCC 204508 / S288c) (Baker's yeast).